The following is a 176-amino-acid chain: Ribosome rescue factor SmrB (176 aa).

Positions 98–173 (LDLHGLTQMQ…GTAAILLLVE (76 aa)) constitute a Smr domain.

The protein belongs to the SmrB family. As to quaternary structure, associates with collided ribosomes, but not with correctly translating polysomes.

Functionally, acts as a ribosome collision sensor. Detects stalled/collided disomes (pairs of ribosomes where the leading ribosome is stalled and a second ribosome has collided with it) and endonucleolytically cleaves mRNA at the 5' boundary of the stalled ribosome. Stalled/collided disomes form a new interface (primarily via the 30S subunits) that binds SmrB. Cleaved mRNA becomes available for tmRNA ligation, leading to ribosomal subunit dissociation and rescue of stalled ribosomes. This is Ribosome rescue factor SmrB from Serratia proteamaculans (strain 568).